Consider the following 296-residue polypeptide: NAD kinase (296 aa).

Asp-72 serves as the catalytic Proton acceptor. NAD(+) contacts are provided by residues 72–73, 146–147, Arg-157, Lys-174, Asp-176, 187–192, and Gln-247; these read DG, ND, and TAYALS.

This sequence belongs to the NAD kinase family. The cofactor is a divalent metal cation.

It localises to the cytoplasm. The catalysed reaction is NAD(+) + ATP = ADP + NADP(+) + H(+). Involved in the regulation of the intracellular balance of NAD and NADP, and is a key enzyme in the biosynthesis of NADP. Catalyzes specifically the phosphorylation on 2'-hydroxyl of the adenosine moiety of NAD to yield NADP. This Pseudomonas fluorescens (strain Pf0-1) protein is NAD kinase.